Consider the following 103-residue polypeptide: Putative membrane protein insertion efficiency factor (103 aa).

This sequence belongs to the UPF0161 family.

It localises to the cell inner membrane. In terms of biological role, could be involved in insertion of integral membrane proteins into the membrane. The chain is Putative membrane protein insertion efficiency factor from Chlamydia caviae (strain ATCC VR-813 / DSM 19441 / 03DC25 / GPIC) (Chlamydophila caviae).